A 103-amino-acid polypeptide reads, in one-letter code: Large ribosomal subunit protein bL21 (103 aa).

It belongs to the bacterial ribosomal protein bL21 family. Part of the 50S ribosomal subunit. Contacts protein L20.

Functionally, this protein binds to 23S rRNA in the presence of protein L20. This Shewanella sp. (strain MR-7) protein is Large ribosomal subunit protein bL21.